A 274-amino-acid polypeptide reads, in one-letter code: Cytochrome b-c1 complex subunit Rieske, mitochondrial (274 aa).

The Mitochondrial matrix segment spans residues 79–110 (SHTDVKVPDFSDYRRAEVLDSTKSSKESSEAR). The chain crosses the membrane as a helical span at residues 111–137 (KGFSYLVTATTTVGVAYAAKNVVSQFV). The Mitochondrial intermembrane portion of the chain corresponds to 138–274 (SSMSASADVL…FTSDDVVVVG (137 aa)). Residues 187 to 272 (EAAVEVSQLR…YEFTSDDVVV (86 aa)) enclose the Rieske domain. Positions 217, 219, 236, 239, and 241 each coordinate [2Fe-2S] cluster. Cys-222 and Cys-238 are disulfide-bonded.

This sequence belongs to the Rieske iron-sulfur protein family. Component of the ubiquinol-cytochrome c oxidoreductase (cytochrome b-c1 complex, complex III, CIII), a multisubunit enzyme composed of 11 subunits. The complex is composed of 3 respiratory subunits cytochrome b, cytochrome c1 and Rieske protein UQCRFS1, 2 core protein subunits UQCRC1/QCR1 and UQCRC2/QCR2, and 6 low-molecular weight protein subunits UQCRH/QCR6, UQCRB/QCR7, UQCRQ/QCR8, UQCR10/QCR9, UQCR11/QCR10 and subunit 9, the cleavage product of Rieske protein UQCRFS1. The complex exists as an obligatory dimer and forms supercomplexes (SCs) in the inner mitochondrial membrane with NADH-ubiquinone oxidoreductase (complex I, CI) and cytochrome c oxidase (complex IV, CIV), resulting in different assemblies (supercomplex SCI(1)III(2)IV(1) and megacomplex MCI(2)III(2)IV(2)). Incorporation of the Rieske protein UQCRFS1 is the penultimate step in complex III assembly. Interacts with TTC19, which is involved in the clearance of UQCRFS1 fragments. As to quaternary structure, component of the ubiquinol-cytochrome c oxidoreductase (cytochrome b-c1 complex, complex III, CIII). Subunit 9 corresponds to the mitochondrial targeting sequence (MTS) of Rieske protein UQCRFS1. It is retained after processing and incorporated inside complex III, where it remains bound to the complex and localizes between the 2 core subunits UQCRC1/QCR1 and UQCRC2/QCR2. It depends on [2Fe-2S] cluster as a cofactor. Proteolytic processing is necessary for the correct insertion of UQCRFS1 in the complex III dimer. Several fragments are generated during UQCRFS1 insertion, most probably due to the endogenous matrix-processing peptidase (MPP) activity of the 2 core protein subunits UQCRC1/QCR1 and UQCRC2/QCR2, which are homologous to the 2 mitochondrial-processing peptidase (MPP) subunits beta-MPP and alpha-MPP respectively. The action of the protease is also necessary for the clearance of the UQCRFS1 fragments.

The protein localises to the mitochondrion inner membrane. The catalysed reaction is a quinol + 2 Fe(III)-[cytochrome c](out) = a quinone + 2 Fe(II)-[cytochrome c](out) + 2 H(+)(out). Functionally, component of the ubiquinol-cytochrome c oxidoreductase, a multisubunit transmembrane complex that is part of the mitochondrial electron transport chain which drives oxidative phosphorylation. The respiratory chain contains 3 multisubunit complexes succinate dehydrogenase (complex II, CII), ubiquinol-cytochrome c oxidoreductase (cytochrome b-c1 complex, complex III, CIII) and cytochrome c oxidase (complex IV, CIV), that cooperate to transfer electrons derived from NADH and succinate to molecular oxygen, creating an electrochemical gradient over the inner membrane that drives transmembrane transport and the ATP synthase. The cytochrome b-c1 complex catalyzes electron transfer from ubiquinol to cytochrome c, linking this redox reaction to translocation of protons across the mitochondrial inner membrane, with protons being carried across the membrane as hydrogens on the quinol. In the process called Q cycle, 2 protons are consumed from the matrix, 4 protons are released into the intermembrane space and 2 electrons are passed to cytochrome c. The Rieske protein is a catalytic core subunit containing a [2Fe-2S] iron-sulfur cluster. It cycles between 2 conformational states during catalysis to transfer electrons from the quinol bound in the Q(0) site in cytochrome b to cytochrome c1. Incorporation of UQCRFS1 is the penultimate step in complex III assembly. In terms of biological role, component of the ubiquinol-cytochrome c oxidoreductase (cytochrome b-c1 complex, complex III, CIII). UQCRFS1 undergoes proteolytic processing once it is incorporated in the complex III dimer. One of the fragments, called subunit 9, corresponds to its mitochondrial targeting sequence (MTS). The proteolytic processing is necessary for the correct insertion of UQCRFS1 in the complex III dimer, but the persistence of UQCRFS1-derived fragments may prevent newly imported UQCRFS1 to be processed and assembled into complex III and is detrimental for the complex III structure and function. The chain is Cytochrome b-c1 complex subunit Rieske, mitochondrial from Mus musculus (Mouse).